Reading from the N-terminus, the 216-residue chain is Protein-L-isoaspartate O-methyltransferase (216 aa).

The active site involves S61.

The protein belongs to the methyltransferase superfamily. L-isoaspartyl/D-aspartyl protein methyltransferase family.

The protein resides in the cytoplasm. The enzyme catalyses [protein]-L-isoaspartate + S-adenosyl-L-methionine = [protein]-L-isoaspartate alpha-methyl ester + S-adenosyl-L-homocysteine. In terms of biological role, catalyzes the methyl esterification of L-isoaspartyl residues in peptides and proteins that result from spontaneous decomposition of normal L-aspartyl and L-asparaginyl residues. It plays a role in the repair and/or degradation of damaged proteins. This chain is Protein-L-isoaspartate O-methyltransferase, found in Geobacter metallireducens (strain ATCC 53774 / DSM 7210 / GS-15).